Here is a 182-residue protein sequence, read N- to C-terminus: Large ribosomal subunit protein uL10 (182 aa).

Belongs to the universal ribosomal protein uL10 family. Part of the ribosomal stalk of the 50S ribosomal subunit. The N-terminus interacts with L11 and the large rRNA to form the base of the stalk. The C-terminus forms an elongated spine to which L12 dimers bind in a sequential fashion forming a multimeric L10(L12)X complex.

Functionally, forms part of the ribosomal stalk, playing a central role in the interaction of the ribosome with GTP-bound translation factors. The chain is Large ribosomal subunit protein uL10 from Parafrankia sp. (strain EAN1pec).